Consider the following 281-residue polypeptide: 2-dehydro-3-deoxyphosphooctonate aldolase (281 aa).

This sequence belongs to the KdsA family.

Its subcellular location is the cytoplasm. It catalyses the reaction D-arabinose 5-phosphate + phosphoenolpyruvate + H2O = 3-deoxy-alpha-D-manno-2-octulosonate-8-phosphate + phosphate. Its pathway is carbohydrate biosynthesis; 3-deoxy-D-manno-octulosonate biosynthesis; 3-deoxy-D-manno-octulosonate from D-ribulose 5-phosphate: step 2/3. It functions in the pathway bacterial outer membrane biogenesis; lipopolysaccharide biosynthesis. The sequence is that of 2-dehydro-3-deoxyphosphooctonate aldolase from Marinobacter nauticus (strain ATCC 700491 / DSM 11845 / VT8) (Marinobacter aquaeolei).